A 770-amino-acid polypeptide reads, in one-letter code: 3-isopropylmalate dehydratase (770 aa).

Residues Cys-354, Cys-415, and Cys-418 each coordinate [4Fe-4S] cluster.

It belongs to the aconitase/IPM isomerase family. As to quaternary structure, monomer. Requires [4Fe-4S] cluster as cofactor.

It catalyses the reaction (2R,3S)-3-isopropylmalate = (2S)-2-isopropylmalate. The protein operates within amino-acid biosynthesis; L-leucine biosynthesis; L-leucine from 3-methyl-2-oxobutanoate: step 2/4. Its function is as follows. Catalyzes the isomerization between 2-isopropylmalate and 3-isopropylmalate, via the formation of 2-isopropylmaleate. In Candida maltosa (Yeast), this protein is 3-isopropylmalate dehydratase (LEU1).